A 32-amino-acid polypeptide reads, in one-letter code: Ribulose bisphosphate carboxylase/oxygenase activase, chloroplastic (32 aa).

The disordered stretch occupies residues 13-32 (FGALREGPPTFEQPAMTIEK).

This sequence belongs to the RuBisCO activase family.

It localises to the plastid. Its subcellular location is the chloroplast stroma. In terms of biological role, activation of RuBisCO (ribulose-1,5-bisphosphate carboxylase/oxygenase; EC 4.1.1.39) involves the ATP-dependent carboxylation of the epsilon-amino group of lysine leading to a carbamate structure. In Populus euphratica (Euphrates poplar), this protein is Ribulose bisphosphate carboxylase/oxygenase activase, chloroplastic.